An 86-amino-acid polypeptide reads, in one-letter code: Trypsin inhibitor (86 aa).

Disulfide bonds link Cys8/Cys65 and Cys49/Cys58.

Its function is as follows. Serine protease inhibitor which is active against trypsin. Displays strong antifungal activity against a number of phytopathogenic fungi including M.melonis, A.cucumerina, A.solani, C.glaeosporioides and P.capsici. This Fagopyrum tataricum (Tartarian buckwheat) protein is Trypsin inhibitor.